The following is a 415-amino-acid chain: Enolase (415 aa).

Q161 is a (2R)-2-phosphoglycerate binding site. Catalysis depends on E203, which acts as the Proton donor. Mg(2+)-binding residues include D240, E281, and D308. (2R)-2-phosphoglycerate contacts are provided by K333, R362, S363, and K384. The active-site Proton acceptor is K333.

The protein belongs to the enolase family. Mg(2+) is required as a cofactor.

It localises to the cytoplasm. The protein localises to the secreted. It is found in the cell surface. It catalyses the reaction (2R)-2-phosphoglycerate = phosphoenolpyruvate + H2O. It functions in the pathway carbohydrate degradation; glycolysis; pyruvate from D-glyceraldehyde 3-phosphate: step 4/5. Its function is as follows. Catalyzes the reversible conversion of 2-phosphoglycerate (2-PG) into phosphoenolpyruvate (PEP). It is essential for the degradation of carbohydrates via glycolysis. The chain is Enolase from Campylobacter hominis (strain ATCC BAA-381 / DSM 21671 / CCUG 45161 / LMG 19568 / NCTC 13146 / CH001A).